The primary structure comprises 264 residues: S-adenosylmethionine decarboxylase proenzyme (264 aa).

The active-site Schiff-base intermediate with substrate; via pyruvic acid is the serine 112. Serine 112 is subject to Pyruvic acid (Ser); by autocatalysis. The active-site Proton acceptor; for processing activity is histidine 117. Cysteine 140 functions as the Proton donor; for catalytic activity in the catalytic mechanism.

This sequence belongs to the prokaryotic AdoMetDC family. Type 2 subfamily. Heterooctamer of four alpha and four beta chains arranged as a tetramer of alpha/beta heterodimers. It depends on pyruvate as a cofactor. Post-translationally, is synthesized initially as an inactive proenzyme. Formation of the active enzyme involves a self-maturation process in which the active site pyruvoyl group is generated from an internal serine residue via an autocatalytic post-translational modification. Two non-identical subunits are generated from the proenzyme in this reaction, and the pyruvate is formed at the N-terminus of the alpha chain, which is derived from the carboxyl end of the proenzyme. The post-translation cleavage follows an unusual pathway, termed non-hydrolytic serinolysis, in which the side chain hydroxyl group of the serine supplies its oxygen atom to form the C-terminus of the beta chain, while the remainder of the serine residue undergoes an oxidative deamination to produce ammonia and the pyruvoyl group blocking the N-terminus of the alpha chain.

The enzyme catalyses S-adenosyl-L-methionine + H(+) = S-adenosyl 3-(methylsulfanyl)propylamine + CO2. The protein operates within amine and polyamine biosynthesis; S-adenosylmethioninamine biosynthesis; S-adenosylmethioninamine from S-adenosyl-L-methionine: step 1/1. In terms of biological role, catalyzes the decarboxylation of S-adenosylmethionine to S-adenosylmethioninamine (dcAdoMet), the propylamine donor required for the synthesis of the polyamines spermine and spermidine from the diamine putrescine. The protein is S-adenosylmethionine decarboxylase proenzyme of Salmonella typhi.